We begin with the raw amino-acid sequence, 180 residues long: Trafficking protein particle complex subunit 3 (180 aa).

Cys-68 carries S-palmitoyl cysteine lipidation.

It belongs to the TRAPP small subunits family. BET3 subfamily. As to quaternary structure, homodimer. Component of the multisubunit transport protein particle (TRAPP) complex, which includes at least TRAPPC2, TRAPPC2L, TRAPPC3, TRAPPC3L, TRAPPC4, TRAPPC5, TRAPPC8, TRAPPC9, TRAPPC10, TRAPPC11 and TRAPPC12. Heterodimer with TRAPPC6A. The heterodimer TRAPPC3-TRAPPC6A interacts with TRAPPC2L. Heterodimer with TRAPPC6b. The heterodimer TRAPPC6B-TRAPPC3 interacts with TRAPPC1 likely providing a core for TRAPP complex formation.

The protein localises to the golgi apparatus. Its subcellular location is the cis-Golgi network. It localises to the endoplasmic reticulum. In terms of biological role, may play a role in vesicular transport from endoplasmic reticulum to Golgi. The chain is Trafficking protein particle complex subunit 3 from Homo sapiens (Human).